The primary structure comprises 512 residues: Maturase K (512 aa).

It belongs to the intron maturase 2 family. MatK subfamily.

It localises to the plastid. The protein localises to the chloroplast. Functionally, usually encoded in the trnK tRNA gene intron. Probably assists in splicing its own and other chloroplast group II introns. The polypeptide is Maturase K (Lilium regale (Regal lily)).